The chain runs to 144 residues: 3-hydroxyacyl-[acyl-carrier-protein] dehydratase FabZ (144 aa).

Residue His51 is part of the active site.

The protein belongs to the thioester dehydratase family. FabZ subfamily.

The protein resides in the cytoplasm. The enzyme catalyses a (3R)-hydroxyacyl-[ACP] = a (2E)-enoyl-[ACP] + H2O. Involved in unsaturated fatty acids biosynthesis. Catalyzes the dehydration of short chain beta-hydroxyacyl-ACPs and long chain saturated and unsaturated beta-hydroxyacyl-ACPs. This Enterococcus faecalis (strain ATCC 700802 / V583) protein is 3-hydroxyacyl-[acyl-carrier-protein] dehydratase FabZ (fabZ1).